The primary structure comprises 250 residues: Probable dihydroorotate dehydrogenase B (NAD(+)), electron transfer subunit (250 aa).

In terms of domain architecture, FAD-binding FR-type spans 1 to 89 (MINLKIEENV…RGPYGNGFDV (89 aa)). [2Fe-2S] cluster-binding residues include C200, C205, C208, and C216.

It belongs to the PyrK family. Heterotetramer of 2 PyrK and 2 PyrD type B subunits. Requires [2Fe-2S] cluster as cofactor. FAD serves as cofactor.

It functions in the pathway pyrimidine metabolism; UMP biosynthesis via de novo pathway; orotate from (S)-dihydroorotate (NAD(+) route): step 1/1. In terms of biological role, responsible for channeling the electrons from the oxidation of dihydroorotate from the FMN redox center in the PyrD type B subunit to the ultimate electron acceptor NAD(+). The protein is Probable dihydroorotate dehydrogenase B (NAD(+)), electron transfer subunit of Thermoplasma volcanium (strain ATCC 51530 / DSM 4299 / JCM 9571 / NBRC 15438 / GSS1).